We begin with the raw amino-acid sequence, 421 residues long: MDKLIITGGVRLDGEIRISGAKNSALPILAATLLADGPVTVQNLPHLHDITTMIELFGRMGIEPVIDEKLSVEIDPRTIKTLVAPYELVKTMRASILVLGPMVARFGEAEVALPGGCAIGSRPVDLHIRGLEAMGAIIDVEGGYIKAKAPEGGLRGANFFFDTVSVTGTENIMMAASLANGRSVLQNAAREPEVVDLANFLIAMGAKIHGAGTDTITIDGVKRLGPATYKVMPDRIETGTYLVAAAVTGGRVKVKDTDPTILEAVLLKLQEAGAEVTTGEDWIELNMHGKRPKAVNVRTAPYPAFPTDMQAQFISLNAIAEGTGAVIETIFENRFMHVYEMHRMGAQIQVEGNTAIVTGTEVLKGAPVMATDLRASASLVISALVAQGDTLIDRIYHIDRGYECIEEKLQMLGAKIRRVPG.

Residue 22 to 23 (KN) coordinates phosphoenolpyruvate. R93 serves as a coordination point for UDP-N-acetyl-alpha-D-glucosamine. Residue C117 is the Proton donor of the active site. A 2-(S-cysteinyl)pyruvic acid O-phosphothioketal modification is found at C117. UDP-N-acetyl-alpha-D-glucosamine-binding positions include 122–126 (RPVDL), D308, and I330.

This sequence belongs to the EPSP synthase family. MurA subfamily.

It is found in the cytoplasm. The enzyme catalyses phosphoenolpyruvate + UDP-N-acetyl-alpha-D-glucosamine = UDP-N-acetyl-3-O-(1-carboxyvinyl)-alpha-D-glucosamine + phosphate. It participates in cell wall biogenesis; peptidoglycan biosynthesis. Its function is as follows. Cell wall formation. Adds enolpyruvyl to UDP-N-acetylglucosamine. This Pseudomonas savastanoi pv. phaseolicola (strain 1448A / Race 6) (Pseudomonas syringae pv. phaseolicola (strain 1448A / Race 6)) protein is UDP-N-acetylglucosamine 1-carboxyvinyltransferase.